The sequence spans 965 residues: Valine--tRNA ligase (965 aa).

Residues 1 to 22 (MENTPSHINKTEPSLDKTYSPQ) are disordered. The 'HIGH' region signature appears at 56 to 66 (PNVTGSLHMGH). Positions 568 to 572 (KMSKS) match the 'KMSKS' region motif. Position 571 (Lys-571) interacts with ATP. Residues 896–965 (LIDKATELDR…IEQQATIAAL (70 aa)) are a coiled coil.

Belongs to the class-I aminoacyl-tRNA synthetase family. ValS type 1 subfamily. In terms of assembly, monomer.

The protein localises to the cytoplasm. The catalysed reaction is tRNA(Val) + L-valine + ATP = L-valyl-tRNA(Val) + AMP + diphosphate. Functionally, catalyzes the attachment of valine to tRNA(Val). As ValRS can inadvertently accommodate and process structurally similar amino acids such as threonine, to avoid such errors, it has a 'posttransfer' editing activity that hydrolyzes mischarged Thr-tRNA(Val) in a tRNA-dependent manner. This is Valine--tRNA ligase from Yersinia pseudotuberculosis serotype I (strain IP32953).